A 140-amino-acid chain; its full sequence is Ribonuclease P protein component (140 aa).

This sequence belongs to the RnpA family. In terms of assembly, consists of a catalytic RNA component (M1 or rnpB) and a protein subunit.

The enzyme catalyses Endonucleolytic cleavage of RNA, removing 5'-extranucleotides from tRNA precursor.. Functionally, RNaseP catalyzes the removal of the 5'-leader sequence from pre-tRNA to produce the mature 5'-terminus. It can also cleave other RNA substrates such as 4.5S RNA. The protein component plays an auxiliary but essential role in vivo by binding to the 5'-leader sequence and broadening the substrate specificity of the ribozyme. The chain is Ribonuclease P protein component from Nostoc sp. (strain PCC 7120 / SAG 25.82 / UTEX 2576).